Reading from the N-terminus, the 248-residue chain is Methionine aminopeptidase 1 (248 aa).

His-77 is a binding site for substrate. The a divalent metal cation site is built by Asp-94, Asp-105, and His-168. His-175 lines the substrate pocket. Residues Glu-201 and Glu-232 each contribute to the a divalent metal cation site.

In terms of assembly, monomer. The cofactor is Co(2+). Zn(2+) serves as cofactor. Mn(2+) is required as a cofactor. Requires Fe(2+) as cofactor.

Its subcellular location is the cytoplasm. It carries out the reaction Release of N-terminal amino acids, preferentially methionine, from peptides and arylamides.. Its function is as follows. Removes the N-terminal methionine from nascent proteins. The N-terminal methionine is often cleaved when the second residue in the primary sequence is small and uncharged (Met-Ala-, Cys, Gly, Pro, Ser, Thr, or Val). Requires deformylation of the N(alpha)-formylated initiator methionine before it can be hydrolyzed. This Bacillus subtilis (strain 168) protein is Methionine aminopeptidase 1.